We begin with the raw amino-acid sequence, 240 residues long: Dihydromonapterin reductase (240 aa).

Y152 functions as the Proton acceptor in the catalytic mechanism.

Belongs to the short-chain dehydrogenases/reductases (SDR) family. FolM subfamily.

It catalyses the reaction (6S)-5,6,7,8-tetrahydrofolate + NADP(+) = 7,8-dihydrofolate + NADPH + H(+). The catalysed reaction is 7,8-dihydromonapterin + NADPH + H(+) = 5,6,7,8-tetrahydromonapterin + NADP(+). Functionally, catalyzes the reduction of dihydromonapterin to tetrahydromonapterin. Also has lower activity with dihydrofolate. This Shigella sonnei (strain Ss046) protein is Dihydromonapterin reductase (folM).